A 174-amino-acid polypeptide reads, in one-letter code: Gamma-crystallin A (174 aa).

Beta/gamma crystallin 'Greek key' domains follow at residues 2–40 (GKITFYEDRGFQGRCYECSSDCPNLQTYFSRCNSIRVDS) and 41–83 (GCWM…RSIP). Positions 84–87 (YTSS) are connecting peptide. 2 consecutive Beta/gamma crystallin 'Greek key' domains span residues 88–128 (HRIR…HVLE) and 129–171 (GCWV…RRVM).

Belongs to the beta/gamma-crystallin family.

In terms of biological role, crystallins are the dominant structural components of the vertebrate eye lens. In Mus musculus (Mouse), this protein is Gamma-crystallin A (Cryga).